We begin with the raw amino-acid sequence, 117 residues long: UPF0251 protein cbdbA217 (117 aa).

The protein belongs to the UPF0251 family.

The sequence is that of UPF0251 protein cbdbA217 from Dehalococcoides mccartyi (strain CBDB1).